The primary structure comprises 355 residues: Glycerol-3-phosphate dehydrogenase [NAD(P)+] (355 aa).

4 residues coordinate NADPH: S14, W15, R35, and K117. Sn-glycerol 3-phosphate-binding residues include K117, G147, and S149. A151 lines the NADPH pocket. K202, D255, S265, R266, and N267 together coordinate sn-glycerol 3-phosphate. The active-site Proton acceptor is K202. R266 lines the NADPH pocket. Positions 290 and 292 each coordinate NADPH.

Belongs to the NAD-dependent glycerol-3-phosphate dehydrogenase family.

The protein resides in the cytoplasm. The enzyme catalyses sn-glycerol 3-phosphate + NAD(+) = dihydroxyacetone phosphate + NADH + H(+). It carries out the reaction sn-glycerol 3-phosphate + NADP(+) = dihydroxyacetone phosphate + NADPH + H(+). It functions in the pathway membrane lipid metabolism; glycerophospholipid metabolism. In terms of biological role, catalyzes the reduction of the glycolytic intermediate dihydroxyacetone phosphate (DHAP) to sn-glycerol 3-phosphate (G3P), the key precursor for phospholipid synthesis. This Lawsonia intracellularis (strain PHE/MN1-00) protein is Glycerol-3-phosphate dehydrogenase [NAD(P)+].